A 474-amino-acid chain; its full sequence is 6-phospho-beta-galactosidase (474 aa).

D-galactose 6-phosphate-binding residues include glutamine 18, histidine 115, asparagine 159, glutamate 160, and asparagine 296. Glutamate 160 (proton donor) is an active-site residue. Catalysis depends on glutamate 374, which acts as the Nucleophile. Serine 427, tryptophan 428, lysine 434, and tyrosine 436 together coordinate D-galactose 6-phosphate.

It belongs to the glycosyl hydrolase 1 family.

It carries out the reaction a 6-phospho-beta-D-galactoside + H2O = D-galactose 6-phosphate + an alcohol. The protein operates within carbohydrate metabolism; lactose degradation; D-galactose 6-phosphate and beta-D-glucose from lactose 6-phosphate: step 1/1. The sequence is that of 6-phospho-beta-galactosidase from Clostridium acetobutylicum (strain ATCC 824 / DSM 792 / JCM 1419 / IAM 19013 / LMG 5710 / NBRC 13948 / NRRL B-527 / VKM B-1787 / 2291 / W).